We begin with the raw amino-acid sequence, 500 residues long: MQTLLCQPCKSLPILTASSSSSLIRSSGDVRECIDFRASEKVSKFQFHVTLSPFAFRGFSICREFAVRGAYGIRFCSREDVSGVGNGGIVAEEEIELLNKPNPLPKSENEESGKADDDAILEPFLKFFKPEEEGEGIESEVSDETDRVSVEYYDPKPGDFVVGVVVSGNENKLDVNIGADMLGTMLTKEILPLYDKELDYLLCDLKYDAEEFLVNGKMGIVKDDDEGVEIAEFARQGRPVVEIGTVVFAEVLGRTLSGRPLLSSRRYFRRIAWHRVRQIKQLNEPIEVKITEWNTGGLLTRIEGLRAFIPKQELVKKVNTFTELKENVGRRFLVQITRLNEDKNDLILSEKVAWEKLYLREGTLLEGTVVKILPYGAQVKLGDSSRSGLLHISNITRRRIGSVSDVLQVDESVKVLVVKSLFPDKISLSIADLESEPGLFISDREKVFTEAEEMAKKYREKMPLVATSPISDRPPITSSFPQGKDEEIYANWEWFKFESQ.

Residues 1-63 (MQTLLCQPCK…FAFRGFSICR (63 aa)) constitute a chloroplast transit peptide. 3 consecutive S1 motif domains span residues 156-265 (KPGD…LSSR), 283-351 (NEPI…LSEK), and 362-431 (GTLL…LSIA).

It belongs to the bacterial ribosomal protein bS1 family. Interacts with CRP1 and PRFB3. Present in leaves (at protein level). Confined to leaf chlorenchyma cells.

It localises to the plastid. It is found in the chloroplast. In terms of biological role, RNA-binding protein that acts as an RNA chaperone to remodel RNA structure and activates their translation. Required for seed pigmentation. Necessary for chloroplast development and subsequent photosynthetic electron flow, as well as for non-photochemical quenching (NPQ). Rubisco regulatory factor which regulates the concerted biogenesis of NDH, PSI (including PsaA, PsaB, PsaD, PsaF, PsaL, PsaG, PsaK and NdhH) and Cytb(6)f (including PetA, PetB, PetC and PetD) complexes. Binds specifically to and involved in the post-transcriptional regulation of plastid-encoded mRNAs (e.g. rbcL, petA, petB, petD and Ycf1), thus modulating expression, cellular localization/compartmentalization, and photosynthetic function. The sequence is that of Protein PIGMENT DEFECTIVE 338, chloroplastic from Arabidopsis thaliana (Mouse-ear cress).